A 356-amino-acid polypeptide reads, in one-letter code: Leucoanthocyanidin dioxygenase (356 aa).

The substrate site is built by Tyr-142 and Lys-213. In terms of domain architecture, Fe2OG dioxygenase spans 208–307 (LLLQMKINYY…RISWAVFCEP (100 aa)). 2-oxoglutarate is bound at residue 215 to 217 (NYY). His-232 lines the Fe cation pocket. Thr-233 is a substrate binding site. Residues Asp-234 and His-288 each contribute to the Fe cation site. 298–300 (RIS) serves as a coordination point for 2-oxoglutarate. Positions 306 and 341 each coordinate substrate.

Belongs to the iron/ascorbate-dependent oxidoreductase family. L-ascorbate is required as a cofactor. The cofactor is Fe(2+). Expressed in young seedlings (at protein level).

The enzyme catalyses a (2R,3S,4S)-leucoanthocyanidin + 2-oxoglutarate + O2 = a 4-H-anthocyanidin with a 3-hydroxy group + succinate + CO2 + 2 H2O. The catalysed reaction is (2R,3S,4S)-3,4-leucopelargonidin + 2-oxoglutarate + O2 = (4S)-2,3-dehydroleucopelargonidin + succinate + CO2 + H2O + H(+). It carries out the reaction (2R,3S,4S)-leucocyanidin + 2-oxoglutarate + O2 = (4S)-2,3-dehydroleucocyanidin + succinate + CO2 + H2O + H(+). Its pathway is pigment biosynthesis; anthocyanin biosynthesis. Involved in anthocyanin and protoanthocyanidin biosynthesis by catalyzing the oxidation of leucoanthocyanidins into anthocyanidins. Possesses low flavonol synthase activity in vitro towards dihydrokaempferol and dihydroquercetin producing kaempferol and quercitin, respectively. This chain is Leucoanthocyanidin dioxygenase (LDOX), found in Arabidopsis thaliana (Mouse-ear cress).